Reading from the N-terminus, the 405-residue chain is Serine/threonine-protein kinase 2 (405 aa).

The region spanning 54-405 is the Protein kinase domain; that stretch reads NDDFYHISTG…IFSDWINGGN (352 aa). Residues 60–68 and Lys84 each bind ATP; that span reads ISTGGYGIV. Asp274 (proton acceptor) is an active-site residue.

Belongs to the protein kinase superfamily. Ser/Thr protein kinase family. Poxviruses subfamily. Phosphorylated in vivo. Autophosphorylated in vitro.

It is found in the host endoplasmic reticulum. The protein resides in the host endoplasmic reticulum-Golgi intermediate compartment. The enzyme catalyses L-seryl-[protein] + ATP = O-phospho-L-seryl-[protein] + ADP + H(+). The catalysed reaction is L-threonyl-[protein] + ATP = O-phospho-L-threonyl-[protein] + ADP + H(+). Its function is as follows. Essential serine-protein kinase involved in the early stage of virion morphogenesis. The polypeptide is Serine/threonine-protein kinase 2 (OPG054) (Vaccinia virus (strain L-IVP) (VACV)).